The chain runs to 304 residues: Aspartate carbamoyltransferase catalytic subunit (304 aa).

Positions 49 and 50 each coordinate carbamoyl phosphate. Lys77 provides a ligand contact to L-aspartate. Residues Arg99, His127, and Gln130 each contribute to the carbamoyl phosphate site. L-aspartate contacts are provided by Arg160 and Arg211. Carbamoyl phosphate contacts are provided by Ala252 and Pro253.

Belongs to the aspartate/ornithine carbamoyltransferase superfamily. ATCase family. As to quaternary structure, heterododecamer (2C3:3R2) of six catalytic PyrB chains organized as two trimers (C3), and six regulatory PyrI chains organized as three dimers (R2).

The catalysed reaction is carbamoyl phosphate + L-aspartate = N-carbamoyl-L-aspartate + phosphate + H(+). The protein operates within pyrimidine metabolism; UMP biosynthesis via de novo pathway; (S)-dihydroorotate from bicarbonate: step 2/3. Its function is as follows. Catalyzes the condensation of carbamoyl phosphate and aspartate to form carbamoyl aspartate and inorganic phosphate, the committed step in the de novo pyrimidine nucleotide biosynthesis pathway. The chain is Aspartate carbamoyltransferase catalytic subunit from Bacillus cereus (strain ATCC 10987 / NRS 248).